Reading from the N-terminus, the 330-residue chain is Phosphate acyltransferase (330 aa).

The protein belongs to the PlsX family. Homodimer. Probably interacts with PlsY.

The protein localises to the cytoplasm. The enzyme catalyses a fatty acyl-[ACP] + phosphate = an acyl phosphate + holo-[ACP]. It participates in lipid metabolism; phospholipid metabolism. In terms of biological role, catalyzes the reversible formation of acyl-phosphate (acyl-PO(4)) from acyl-[acyl-carrier-protein] (acyl-ACP). This enzyme utilizes acyl-ACP as fatty acyl donor, but not acyl-CoA. This Bacillus thuringiensis (strain Al Hakam) protein is Phosphate acyltransferase.